Reading from the N-terminus, the 747-residue chain is Probable cyclic nucleotide-gated ion channel 6 (747 aa).

Residues 1–117 are Cytoplasmic-facing; it reads MFDTCGPKGV…DKFLLLCNKL (117 aa). The chain crosses the membrane as a helical span at residues 118–138; that stretch reads FVASCILAVSVDPLFLYLPFI. The Extracellular segment spans residues 139–150; sequence NDKAKCVGIDRK. Residues 151 to 171 form a helical membrane-spanning segment; the sequence is LAIIVTTIRTVIDSFYLFHMA. At 172 to 205 the chain is on the cytoplasmic side; sequence LRFRTAYVAPSSRVFGRGELVIDPAQIAKRYLQQ. A helical transmembrane segment spans residues 206 to 226; it reads YFIIDLLSVLPVPQIIVWRFL. Residues 227-239 are Extracellular-facing; it reads YTSRGANVLATKQ. The helical transmembrane segment at 240-260 threads the bilayer; the sequence is ALRYIVLVQYIPRFLRMYPLS. The Cytoplasmic segment spans residues 261–280; that stretch reads SELKRTAGVFAETAWAGAAY. A helical transmembrane segment spans residues 281–301; that stretch reads YLLLYMLASHIVGALWYLLAL. At 302-407 the chain is on the extracellular side; that stretch reads ERNNDCWSKA…GQGLETSTYP (106 aa). The helical transmembrane segment at 408-428 threads the bilayer; that stretch reads GEVIFSITLAIAGLLLFALLI. The Cytoplasmic segment spans residues 429–747; it reads GNMQTYLQSL…PEPDFSAEDH (319 aa). A nucleoside 3',5'-cyclic phosphate is bound by residues 514-638 and Asp-585; that span reads LFEN…SRQV. Positions 630 to 645 are calmodulin-binding; sequence FRRLHSRQVQHTFRFY. Residues 650 to 679 enclose the IQ domain; sequence RTWAACFMQAAWRRYIKRKKLEQLRKEEEE.

The protein belongs to the cyclic nucleotide-gated cation channel (TC 1.A.1.5) family. Homotetramer or heterotetramer.

Its subcellular location is the cell membrane. In terms of biological role, probable cyclic nucleotide-gated ion channel. This is Probable cyclic nucleotide-gated ion channel 6 (CNGC6) from Arabidopsis thaliana (Mouse-ear cress).